The sequence spans 247 residues: Agamous-like MADS-box protein FUL-L (247 aa).

In terms of domain architecture, MADS-box spans Met1–Ser61. The K-box domain maps to Gln88–Val178. The interval Glu224–Glu247 is disordered.

As to expression, expressed in tendrils and flowers.

The protein resides in the nucleus. Its function is as follows. Probable transcription factor involved in flower development. The chain is Agamous-like MADS-box protein FUL-L from Vitis vinifera (Grape).